The chain runs to 108 residues: Protein FMC1 homolog (108 aa).

The protein belongs to the FMC1 family.

This Caenorhabditis elegans protein is Protein FMC1 homolog.